A 443-amino-acid polypeptide reads, in one-letter code: Thymidine phosphorylase (443 aa).

It belongs to the thymidine/pyrimidine-nucleoside phosphorylase family. As to quaternary structure, homodimer.

The catalysed reaction is thymidine + phosphate = 2-deoxy-alpha-D-ribose 1-phosphate + thymine. It participates in pyrimidine metabolism; dTMP biosynthesis via salvage pathway; dTMP from thymine: step 1/2. The enzymes which catalyze the reversible phosphorolysis of pyrimidine nucleosides are involved in the degradation of these compounds and in their utilization as carbon and energy sources, or in the rescue of pyrimidine bases for nucleotide synthesis. The polypeptide is Thymidine phosphorylase (Shewanella pealeana (strain ATCC 700345 / ANG-SQ1)).